The primary structure comprises 101 residues: NADH-quinone oxidoreductase subunit K (101 aa).

Transmembrane regions (helical) follow at residues leucine 4–leucine 24, isoleucine 30–phenylalanine 50, and valine 61–leucine 81.

This sequence belongs to the complex I subunit 4L family. As to quaternary structure, NDH-1 is composed of 14 different subunits. Subunits NuoA, H, J, K, L, M, N constitute the membrane sector of the complex.

It localises to the cell inner membrane. The enzyme catalyses a quinone + NADH + 5 H(+)(in) = a quinol + NAD(+) + 4 H(+)(out). Functionally, NDH-1 shuttles electrons from NADH, via FMN and iron-sulfur (Fe-S) centers, to quinones in the respiratory chain. The immediate electron acceptor for the enzyme in this species is believed to be ubiquinone. Couples the redox reaction to proton translocation (for every two electrons transferred, four hydrogen ions are translocated across the cytoplasmic membrane), and thus conserves the redox energy in a proton gradient. The polypeptide is NADH-quinone oxidoreductase subunit K (Cupriavidus metallidurans (strain ATCC 43123 / DSM 2839 / NBRC 102507 / CH34) (Ralstonia metallidurans)).